The primary structure comprises 213 residues: Large ribosomal subunit protein uL1 (213 aa).

The protein belongs to the universal ribosomal protein uL1 family. In terms of assembly, part of the 50S ribosomal subunit.

In terms of biological role, binds directly to 23S rRNA. Probably involved in E site tRNA release. Protein L1 is also a translational repressor protein, it controls the translation of its operon by binding to its mRNA. The polypeptide is Large ribosomal subunit protein uL1 (Methanosarcina acetivorans (strain ATCC 35395 / DSM 2834 / JCM 12185 / C2A)).